The following is a 131-amino-acid chain: Small ribosomal subunit protein uS8 (131 aa).

It belongs to the universal ribosomal protein uS8 family. Part of the 30S ribosomal subunit. Contacts proteins S5 and S12.

In terms of biological role, one of the primary rRNA binding proteins, it binds directly to 16S rRNA central domain where it helps coordinate assembly of the platform of the 30S subunit. The protein is Small ribosomal subunit protein uS8 of Burkholderia mallei (strain NCTC 10247).